Consider the following 211-residue polypeptide: MCPGNWLWASVTFMARFSRSGSRSPVRVRGALEEPPAVQHPFLNVFELERLLYTGKTACNHADEVWPGLYLGDQEIANNHRELRRLGITHVLNASHSRWRGTPEAYEGLGIRYLGVEAHDSPAFDMSVHFQAAADFIHRALSQPGGRILVHCAVGVSRSATLVLAYLMLYHRLTLVEAIKKVKDHRGIIPNRGFLRQLLALDRRLRQGLEA.

Residues 60–207 enclose the Tyrosine-protein phosphatase domain; that stretch reads NHADEVWPGL…LLALDRRLRQ (148 aa). C152 (phosphocysteine intermediate) is an active-site residue.

Belongs to the protein-tyrosine phosphatase family. Non-receptor class dual specificity subfamily. Interacts with HSF4.

The protein resides in the cytoplasm. It is found in the nucleus. Its subcellular location is the golgi apparatus. The enzyme catalyses O-phospho-L-tyrosyl-[protein] + H2O = L-tyrosyl-[protein] + phosphate. It catalyses the reaction O-phospho-L-seryl-[protein] + H2O = L-seryl-[protein] + phosphate. The catalysed reaction is O-phospho-L-threonyl-[protein] + H2O = L-threonyl-[protein] + phosphate. Inactivates MAPK1 and MAPK3 which leads to dephosphorylation of heat shock factor protein 4 and a reduction in its DNA-binding activity. The protein is Dual specificity protein phosphatase 26 (DUSP26) of Bos taurus (Bovine).